A 764-amino-acid chain; its full sequence is 5-methyltetrahydropteroyltriglutamate--homocysteine methyltransferase (764 aa).

Residues 16–19 and K121 each bind 5-methyltetrahydropteroyltri-L-glutamate; that span reads RELK. L-homocysteine is bound by residues 440–442 and E493; that span reads IGS. L-methionine contacts are provided by residues 440–442 and E493; that span reads IGS. Residues 524–525 and W570 each bind 5-methyltetrahydropteroyltri-L-glutamate; that span reads RC. D608 is a binding site for L-homocysteine. Residue D608 coordinates L-methionine. Residue E614 coordinates 5-methyltetrahydropteroyltri-L-glutamate. Zn(2+) is bound by residues H650, C652, and E674. H703 serves as the catalytic Proton donor. C735 contributes to the Zn(2+) binding site.

The protein belongs to the vitamin-B12 independent methionine synthase family. Zn(2+) serves as cofactor.

The catalysed reaction is 5-methyltetrahydropteroyltri-L-glutamate + L-homocysteine = tetrahydropteroyltri-L-glutamate + L-methionine. The protein operates within amino-acid biosynthesis; L-methionine biosynthesis via de novo pathway; L-methionine from L-homocysteine (MetE route): step 1/1. In terms of biological role, catalyzes the transfer of a methyl group from 5-methyltetrahydrofolate to homocysteine resulting in methionine formation. The protein is 5-methyltetrahydropteroyltriglutamate--homocysteine methyltransferase of Burkholderia ambifaria (strain MC40-6).